A 209-amino-acid polypeptide reads, in one-letter code: Chaperone protein TorD (209 aa).

This sequence belongs to the TorD/DmsD family. TorD subfamily.

It localises to the cytoplasm. Functionally, involved in the biogenesis of TorA. Acts on TorA before the insertion of the molybdenum cofactor and, as a result, probably favors a conformation of the apoenzyme that is competent for acquiring the cofactor. The polypeptide is Chaperone protein TorD (Shewanella baltica (strain OS155 / ATCC BAA-1091)).